The sequence spans 224 residues: IAP-like protein p27 (224 aa).

One copy of the BIR repeat lies at 29–92 (VDARNQSFAI…GFWSRNCGFM (64 aa)). Positions 62, 65, 82, and 89 each coordinate Zn(2+).

In terms of biological role, not essential for growth or virulence. Does not have antiapoptotic function. The chain is IAP-like protein p27 (p27) from Ornithodoros (relapsing fever ticks).